We begin with the raw amino-acid sequence, 286 residues long: 4-hydroxybenzoate octaprenyltransferase (286 aa).

A run of 9 helical transmembrane segments spans residues 19 to 39 (AGWLLLLWPTLSALWVASHGF), 42 to 62 (WHLLTVFTLGTILMRSAGCCV), 92 to 112 (ALVLGAVLALLAFGLVLTTNA), 115 to 135 (IAWSFAALAVTLAYPFAKRYV), 137 to 157 (MPQAVLGVAFSFGIPMAFAAV), 161 to 181 (VPLLAWVLLLGNLCWVIAYDT), 206 to 226 (FDVAGVMLSYLVYLSVWALAL), 233 to 253 (AIYWMAIGLAGLQALWHGWLI), and 264 to 284 (AFRLNHWLGFTVFAGIALSYL).

The protein belongs to the UbiA prenyltransferase family. Mg(2+) serves as cofactor.

Its subcellular location is the cell inner membrane. It carries out the reaction all-trans-octaprenyl diphosphate + 4-hydroxybenzoate = 4-hydroxy-3-(all-trans-octaprenyl)benzoate + diphosphate. The protein operates within cofactor biosynthesis; ubiquinone biosynthesis. In terms of biological role, catalyzes the prenylation of para-hydroxybenzoate (PHB) with an all-trans polyprenyl group. Mediates the second step in the final reaction sequence of ubiquinone-8 (UQ-8) biosynthesis, which is the condensation of the polyisoprenoid side chain with PHB, generating the first membrane-bound Q intermediate 3-octaprenyl-4-hydroxybenzoate. The protein is 4-hydroxybenzoate octaprenyltransferase of Polaromonas sp. (strain JS666 / ATCC BAA-500).